A 187-amino-acid polypeptide reads, in one-letter code: MDRYAFLSFYKCTHQVGKFVGSDTWSNVLRESWFFNNWKELLVPVSLSTFLLLGLKGYLDEQFCQVEDLQDEASPNFVEEVVTLFFKDSGRLMSNIEQALEKYPRDFNRWDTYMQQLKGSCSSIGASRMKNECMSFRDSCGQGNVEGCMRSFQKVKREHAVLRQKLESYFQLLRQAGPAGAATRPVM.

The 96-residue stretch at 74–169 (SPNFVEEVVT…AVLRQKLESY (96 aa)) folds into the HPt domain.

In terms of biological role, functions as a two-component phosphorelay mediator between cytokinin sensor histidine kinases and response regulators (B-type ARRs). Plays an important role in propagating cytokinin signal transduction. The sequence is that of Pseudo histidine-containing phosphotransfer protein 1 from Oryza sativa subsp. japonica (Rice).